Consider the following 146-residue polypeptide: uncharacterized protein (146 aa).

This is an uncharacterized protein from Bacillus subtilis (strain 168).